The chain runs to 795 residues: Phenylalanine--tRNA ligase beta subunit (795 aa).

Positions 39 to 148 (AGTFNGVVVG…LDAPIGTDLR (110 aa)) constitute a tRNA-binding domain. One can recognise a B5 domain in the interval 401–476 (PKVNTVQLRR…RIYGYNSIPN (76 aa)). 4 residues coordinate Mg(2+): Asp-454, Asp-460, Glu-463, and Glu-464. Residues 701 to 794 (SKFPANRRDL…VKQRFNAELR (94 aa)) enclose the FDX-ACB domain.

It belongs to the phenylalanyl-tRNA synthetase beta subunit family. Type 1 subfamily. Tetramer of two alpha and two beta subunits. Mg(2+) is required as a cofactor.

Its subcellular location is the cytoplasm. The enzyme catalyses tRNA(Phe) + L-phenylalanine + ATP = L-phenylalanyl-tRNA(Phe) + AMP + diphosphate + H(+). This chain is Phenylalanine--tRNA ligase beta subunit (pheT), found in Haemophilus influenzae (strain ATCC 51907 / DSM 11121 / KW20 / Rd).